Reading from the N-terminus, the 281-residue chain is Bifunctional protein FolD (281 aa).

Residues 165–167 (GRG), T192, and V233 contribute to the NADP(+) site.

It belongs to the tetrahydrofolate dehydrogenase/cyclohydrolase family. As to quaternary structure, homodimer.

It carries out the reaction (6R)-5,10-methylene-5,6,7,8-tetrahydrofolate + NADP(+) = (6R)-5,10-methenyltetrahydrofolate + NADPH. The catalysed reaction is (6R)-5,10-methenyltetrahydrofolate + H2O = (6R)-10-formyltetrahydrofolate + H(+). The protein operates within one-carbon metabolism; tetrahydrofolate interconversion. Catalyzes the oxidation of 5,10-methylenetetrahydrofolate to 5,10-methenyltetrahydrofolate and then the hydrolysis of 5,10-methenyltetrahydrofolate to 10-formyltetrahydrofolate. This chain is Bifunctional protein FolD, found in Mycobacteroides abscessus (strain ATCC 19977 / DSM 44196 / CCUG 20993 / CIP 104536 / JCM 13569 / NCTC 13031 / TMC 1543 / L948) (Mycobacterium abscessus).